We begin with the raw amino-acid sequence, 354 residues long: S-adenosylmethionine:tRNA ribosyltransferase-isomerase (354 aa).

It belongs to the QueA family. In terms of assembly, monomer.

The protein resides in the cytoplasm. It catalyses the reaction 7-aminomethyl-7-carbaguanosine(34) in tRNA + S-adenosyl-L-methionine = epoxyqueuosine(34) in tRNA + adenine + L-methionine + 2 H(+). Its pathway is tRNA modification; tRNA-queuosine biosynthesis. Transfers and isomerizes the ribose moiety from AdoMet to the 7-aminomethyl group of 7-deazaguanine (preQ1-tRNA) to give epoxyqueuosine (oQ-tRNA). In Pseudomonas fluorescens (strain ATCC BAA-477 / NRRL B-23932 / Pf-5), this protein is S-adenosylmethionine:tRNA ribosyltransferase-isomerase.